Consider the following 472-residue polypeptide: Maintenance of mitochondrial morphology protein 1 (472 aa).

Topologically, residues 1–22 (MAFQQGEAAPVSTQSSLSFTQG) are lumenal. Residues 23–43 (FLLGQLSVVLLIGAFIKFFIF) form a helical membrane-spanning segment. The Cytoplasmic segment spans residues 44–472 (GEAPPPPSRG…GSMPEAPGAQ (429 aa)). Disordered regions lie at residues 51–92 (SRGL…VPSS), 270–303 (LHTP…PKSS), and 370–472 (RMGR…PGAQ). The segment covering 81–92 (STSNVLRPVPSS) has biased composition (polar residues). Residues 124 to 365 (QPESLDWFNV…EPRVQVVGLP (242 aa)) form the SMP-LTD domain. Residues 270-280 (LHTPSPMPSPP) show a composition bias toward pro residues. The segment covering 281-297 (TAGAQPAAGAQPTDGGD) has biased composition (low complexity). Over residues 450 to 460 (TRERSLGDDFH) the composition is skewed to basic and acidic residues.

The protein belongs to the MMM1 family. In terms of assembly, homodimer. Component of the ER-mitochondria encounter structure (ERMES) or MDM complex, composed of mmm1, mdm10, mdm12 and mdm34. A mmm1 homodimer associates with one molecule of mdm12 on each side in a pairwise head-to-tail manner, and the SMP-LTD domains of mmm1 and mdm12 generate a continuous hydrophobic tunnel for phospholipid trafficking.

The protein localises to the endoplasmic reticulum membrane. Its function is as follows. Component of the ERMES/MDM complex, which serves as a molecular tether to connect the endoplasmic reticulum (ER) and mitochondria. Components of this complex are involved in the control of mitochondrial shape and protein biogenesis, and function in nonvesicular lipid trafficking between the ER and mitochondria. The mdm12-mmm1 subcomplex functions in the major beta-barrel assembly pathway that is responsible for biogenesis of all outer membrane beta-barrel proteins, and acts in a late step after the SAM complex. The mdm10-mdm12-mmm1 subcomplex further acts in the TOM40-specific pathway after the action of the mdm12-mmm1 complex. Essential for establishing and maintaining the structure of mitochondria and maintenance of mtDNA nucleoids. The protein is Maintenance of mitochondrial morphology protein 1 of Emericella nidulans (strain FGSC A4 / ATCC 38163 / CBS 112.46 / NRRL 194 / M139) (Aspergillus nidulans).